Here is a 206-residue protein sequence, read N- to C-terminus: Uridine kinase (206 aa).

11–18 (GGTGSGKS) provides a ligand contact to ATP.

This sequence belongs to the uridine kinase family.

The protein resides in the cytoplasm. The enzyme catalyses uridine + ATP = UMP + ADP + H(+). The catalysed reaction is cytidine + ATP = CMP + ADP + H(+). Its pathway is pyrimidine metabolism; CTP biosynthesis via salvage pathway; CTP from cytidine: step 1/3. The protein operates within pyrimidine metabolism; UMP biosynthesis via salvage pathway; UMP from uridine: step 1/1. The sequence is that of Uridine kinase from Clostridium botulinum (strain 657 / Type Ba4).